The following is a 317-amino-acid chain: Methionyl-tRNA formyltransferase (317 aa).

112-115 (SLLP) serves as a coordination point for (6S)-5,6,7,8-tetrahydrofolate.

The protein belongs to the Fmt family.

It catalyses the reaction L-methionyl-tRNA(fMet) + (6R)-10-formyltetrahydrofolate = N-formyl-L-methionyl-tRNA(fMet) + (6S)-5,6,7,8-tetrahydrofolate + H(+). Its function is as follows. Attaches a formyl group to the free amino group of methionyl-tRNA(fMet). The formyl group appears to play a dual role in the initiator identity of N-formylmethionyl-tRNA by promoting its recognition by IF2 and preventing the misappropriation of this tRNA by the elongation apparatus. The chain is Methionyl-tRNA formyltransferase from Histophilus somni (strain 129Pt) (Haemophilus somnus).